The primary structure comprises 545 residues: Cannabidiolic acid synthase-like 1 (545 aa).

An N-terminal signal peptide occupies residues 1-28 (MKCSTFCFWYVCKIIFFFLSFNIQISIA). The cysteines at positions 37 and 99 are disulfide-linked. 4 N-linked (GlcNAc...) asparagine glycosylation sites follow: asparagine 45, asparagine 65, asparagine 89, and asparagine 168. Residues 77–251 (TTPKPLVIIT…AAWKIRLVAV (175 aa)) enclose the FAD-binding PCMH-type domain. The segment at residues 114–176 (HDAEGMSYIS…ENLSFPAGYC (63 aa)) is a cross-link (6-(S-cysteinyl)-8alpha-(pros-histidyl)-FAD (His-Cys)). Substrate is bound at residue histidine 292. N-linked (GlcNAc...) asparagine glycans are attached at residues asparagine 297, asparagine 305, asparagine 329, and asparagine 361. Residue tyrosine 417 coordinates substrate. N-linked (GlcNAc...) asparagine glycosylation occurs at asparagine 467. The Proton acceptor role is filled by tyrosine 484. Residue asparagine 499 is glycosylated (N-linked (GlcNAc...) asparagine).

Belongs to the oxygen-dependent FAD-linked oxidoreductase family. The cofactor is FAD. The FAD cofactor is bound via a bicovalent 6-S-cysteinyl, 8alpha-N1-histidyl FAD linkage.

It localises to the secreted. In terms of biological role, has no cannabidiolic acid synthase activity. This chain is Cannabidiolic acid synthase-like 1 (CBDAS2), found in Cannabis sativa (Hemp).